We begin with the raw amino-acid sequence, 452 residues long: UDP-N-acetylmuramoylalanine--D-glutamate ligase (452 aa).

An ATP-binding site is contributed by 115–121 (GTNGKTT).

It belongs to the MurCDEF family.

The protein localises to the cytoplasm. The enzyme catalyses UDP-N-acetyl-alpha-D-muramoyl-L-alanine + D-glutamate + ATP = UDP-N-acetyl-alpha-D-muramoyl-L-alanyl-D-glutamate + ADP + phosphate + H(+). The protein operates within cell wall biogenesis; peptidoglycan biosynthesis. Cell wall formation. Catalyzes the addition of glutamate to the nucleotide precursor UDP-N-acetylmuramoyl-L-alanine (UMA). The sequence is that of UDP-N-acetylmuramoylalanine--D-glutamate ligase from Geobacter sp. (strain M21).